The chain runs to 440 residues: Sequestosome-1 (440 aa).

At Ala-2 the chain carries N-acetylalanine. The interaction with LCK stretch occupies residues 2–50; that stretch reads ASLTVKAYLLGKEDAAREIRRFSFCCSPEPEAEAEAAAGPGPCERLLSR. The 100-residue stretch at 3-102 folds into the PB1 domain; the sequence is SLTVKAYLLG…DIFRIYIKEK (100 aa). Phosphoserine is present on Ser-24. The segment at 43-107 is interaction with PRKCZ and dimerization; it reads PCERLLSRVA…YIKEKKECRR (65 aa). An interaction with PAWR region spans residues 50–80; sequence RVAALFPALRPGGFQAHYRDEDGDLVAFSSD. Lys-91 participates in a covalent cross-link: Glycyl lysine isopeptide (Lys-Gly) (interchain with G-Cter in ubiquitin). Residues 122 to 224 are interaction with GABRR3; sequence VHPNVICDGC…EARPGPTAES (103 aa). The ZZ-type zinc-finger motif lies at 123 to 173; it reads HPNVICDGCNGPVVGTRYKCSVCPDYDLCSVCEGKGLHRGHTKLAFPSPFG. Zn(2+) is bound by residues Cys-128, Cys-131, Cys-142, and Cys-145. The residue at position 148 (Tyr-148) is a Phosphotyrosine. Zn(2+) is bound by residues Cys-151, Cys-154, His-160, and His-163. Phosphoserine occurs at positions 170 and 176. The LIM protein-binding (LB) stretch occupies residues 170–220; it reads SPFGHLSEGFSHSRWLRKVKHGHFGWPGWEMGPPGNWSPRPPRAGEARPGP. Lys-189 participates in a covalent cross-link: Glycyl lysine isopeptide (Lys-Gly) (interchain with G-Cter in ubiquitin). The tract at residues 196–235 is disordered; it reads PGWEMGPPGNWSPRPPRAGEARPGPTAESASGPSEDPSVN. Phosphoserine occurs at positions 207, 233, 249, and 266. The TRAF6-binding signature appears at 228–233; that stretch reads PSEDPS. A disordered region spans residues 264–390; it reads KRSRLTPVSP…ALYPHLPPEA (127 aa). Thr-269 is subject to Phosphothreonine. The interaction with NTRK1 stretch occupies residues 269 to 440; the sequence is TPVSPESSST…IQYSKHPPPL (172 aa). 2 positions are modified to phosphoserine: Ser-272 and Ser-282. Over residues 283–296 the composition is skewed to low complexity; the sequence is SSQPSSCCSDPSKP. Residues Cys-289 and Cys-290 are each lipidated (S-palmitoyl cysteine). Ser-306 carries the phosphoserine modification. Basic and acidic residues predominate over residues 310 to 324; sequence QMRKIALESEGRPEE. The interval 321–342 is MAP1LC3B-binding; that stretch reads RPEEQMESDNCSGGDDDWTHLS. Residues Ser-328 and Ser-332 each carry the phosphoserine modification. Residues 336–341 carry the LIR motif; it reads DDWTHL. The segment covering 337-347 has biased composition (basic and acidic residues); that stretch reads DWTHLSSKEVD. The interaction with KEAP1 stretch occupies residues 347–352; that stretch reads DPSTGE. The residue at position 349 (Ser-349) is a Phosphoserine; by ULK1. A compositionally biased stretch (polar residues) spans 351 to 373; sequence GELQSLQMPESEGPSSLDPSQEG. 4 positions are modified to phosphoserine: Ser-355, Ser-361, Ser-365, and Ser-366. The 46-residue stretch at 389–434 folds into the UBA domain; the sequence is EADPRLIESLSQMLSMGFSDEGGWLTRLLQTKNYDIGAALDTIQYS. At Ser-403 the chain carries Phosphoserine; by CK2, ULK1 and TBK1. Ser-407 carries the post-translational modification Phosphoserine; by ULK1. 2 positions are modified to N6-acetyllysine; alternate: Lys-420 and Lys-435. Lys-420 participates in a covalent cross-link: Glycyl lysine isopeptide (Lys-Gly) (interchain with G-Cter in ubiquitin); alternate. A Glycyl lysine isopeptide (Lys-Gly) (interchain with G-Cter in SUMO2); alternate cross-link involves residue Lys-435.

As to quaternary structure, homooligomer or heterooligomer; may form homotypic arrays. Dimerization interferes with ubiquitin binding. Component of a ternary complex with PAWR and PRKCZ. Forms a complex with JUB/Ajuba, PRKCZ and TRAF6. Identified in a complex with TRAF6 and CYLD. Identified in a heterotrimeric complex with ubiquitin and ZFAND5, where ZFAND5 and SQSTM1 both interact with the same ubiquitin molecule. Interacts (via LIR motif) with MAP1LC3A and MAP1LC3B, as well as with other ATG8 family members, including GABARAP, GABARAPL1 and GABARAPL2; these interactions are necessary for the recruitment MAP1 LC3 family members to inclusion bodies containing polyubiquitinated protein aggregates and for their degradation by autophagy. Interacts directly with PRKCI and PRKCZ. Interacts with EBI3, LCK, RASA1, NR2F2, NTRK1, NTRK2, NTRK3, NBR1, MAP2K5 and MAPKAPK5. Upon TNF-alpha stimulation, interacts with RIPK1 probably bridging IKBKB to the TNF-R1 complex composed of TNF-R1/TNFRSF1A, TRADD and RIPK1. Interacts with the proteasome subunits PSMD4 and PSMC2. Interacts with TRAF6. Interacts with 'Lys-63'-linked polyubiquitinated MAPT/TAU. Interacts with FHOD3. Interacts with CYLD. Interacts with SESN1. Interacts with SESN2. Interacts with ULK1. Interacts with UBD. Interacts with WDR81; the interaction is direct and regulates the interaction of SQSTM1 with ubiquitinated proteins. Interacts with WDFY3; this interaction is required to recruit WDFY3 to cytoplasmic bodies and to PML bodies. Interacts with LRRC25. Interacts with STING1; leading to relocalization of STING1 to autophagosomes. Interacts (when phosphorylated at Ser-349) with KEAP1; the interaction is direct and inactivates the BCR(KEAP1) complex by sequestering KEAP1 in inclusion bodies, promoting its degradation. Interacts with MOAP1; promoting dissociation of SQSTM1 inclusion bodies that sequester KEAP1. Interacts with GBP1. Interacts with TAX1BP1. Interacts with (ubiquitinated) PEX5; specifically binds PEX5 ubiquitinated at 'Lys-209' in response to reactive oxygen species (ROS). Interacts (via PB1 domain) with TNS2; the interaction leads to sequestration of TNS2 in cytoplasmic aggregates with SQSTM1 and promotes TNS2 ubiquitination and proteasomal degradation. Interacts with IRS1; the interaction is disrupted by the presence of tensin TNS2. Interacts with TRIM5. Interacts with TRIM11 (when ubiquitinated); promoting AIM2 recruitment to autophagosomes and autophagy-dependent degradation of AIM2. Interacts with TRIM13. Interacts with TRIM16. Interacts with TRIM23. Interacts with TRIM50. Interacts with TRIM55. Interacts with ECSIT; this interaction inhibits TLR4 signaling via functional regulation of the TRAF6-ECSIT complex. Interacts with GABRR1, GABRR2 and GABRR3. Interacts with WDR83. Interacts with GRB2. Interacts with USP12; the interaction is independent of USP12 deubiquitinase activity and may be involved in regulation of autophagic flux. Interacts with ASB6. In terms of processing, phosphorylation at Ser-407 by ULK1 destabilizes the UBA dimer interface and increases binding affinity to ubiquitinated proteins. Phosphorylation at Ser-407 also primes for subsequent phosphorylation at Ser-403. Phosphorylation at Ser-403 by CK2 or ULK1 promotes binding to ubiquitinated proteins by increasing the affinity between the UBA domain and polyubiquitin chains. Phosphorylation at Ser-403 by ULK1 is stimulated by SESN2. Phosphorylated at Ser-403 by TBK1, leading to promote relocalization of 'Lys-63'-linked ubiquitinated STING1 to autophagosomes. Phosphorylation at Ser-349 by ULK1 promotes interaction with KEAP1 and inactivation of the BCR(KEAP1) complex, promoting NFE2L2/NRF2 nuclear accumulation and expression of phase II detoxifying enzymes. Phosphorylated in vitro by TTN. Post-translationally, ubiquitinated by UBE2J1 and RNF26 at Lys-435: ubiquitinated SQSTM1 attracts specific vesicle-associated adapters, forming a molecular bridge that restrains cognate vesicles in the perinuclear region and organizes the endosomal pathway for efficient cargo transport. Ubiquitination by UBE2D2 and UBE2D3 increases its ability to bind polyubiquitin chains by destabilizing the UBA dimer interface. Deubiquitination by USP15 releases target vesicles for fast transport into the cell periphery. Ubiquitinated by the BCR(KEAP1) complex at Lys-420, increasing SQSTM1 sequestering activity and promoting its degradation. Ubiquitinated via 'Lys-29' and 'Lys-33'-linked polyubiquitination leading to xenophagic targeting of bacteria and inhibition of their replication. Acetylated at Lys-420 and Lys-435 by KAT5/TIP60, promotes activity by destabilizing the UBA dimer interface and increases binding affinity to ubiquitinated proteins. Deacetylated by HDAC6. In terms of processing, palmitoylation at Cys-289 and Cys-290 by ZDHHC19 is required for efficient autophagic degradation of SQSTM1-cargo complexes by promoting affinity for ATG8 proteins and recruitment of p62 bodies to autophagosomes. Dealmitoylated at Cys-289 and Cys-290 by LYPLA1. Post-translationally, (Microbial infection) Cleaved by S.pyogenes SpeB protease; leading to its degradation. Degradation by SpeB prevents autophagy, promoting to S.pyogenes intracellular replication. (Microbial infection) Deubiquitinated by Epstein-Barr virus BPLF1; leading to inhibition of the recruitment of MAP1LC3A/LC3 to SQSTM1-positive structures. As to expression, ubiquitously expressed.

The protein localises to the cytoplasmic vesicle. It is found in the autophagosome. Its subcellular location is the preautophagosomal structure. It localises to the cytoplasm. The protein resides in the cytosol. The protein localises to the nucleus. It is found in the PML body. Its subcellular location is the late endosome. It localises to the lysosome. The protein resides in the endoplasmic reticulum. The protein localises to the myofibril. It is found in the sarcomere. Molecular adapter required for selective macroautophagy (aggrephagy) by acting as a bridge between polyubiquitinated proteins and autophagosomes. Promotes the recruitment of ubiquitinated cargo proteins to autophagosomes via multiple domains that bridge proteins and organelles in different steps. SQSTM1 first mediates the assembly and removal of ubiquitinated proteins by undergoing liquid-liquid phase separation upon binding to ubiquitinated proteins via its UBA domain, leading to the formation of insoluble cytoplasmic inclusions, known as p62 bodies. SQSTM1 then interacts with ATG8 family proteins on autophagosomes via its LIR motif, leading to p62 body recruitment to autophagosomes, followed by autophagic clearance of ubiquitinated proteins. SQSTM1 is itself degraded along with its ubiquitinated cargos. Also required to recruit ubiquitinated proteins to PML bodies in the nucleus. Also involved in autophagy of peroxisomes (pexophagy) in response to reactive oxygen species (ROS) by acting as a bridge between ubiquitinated PEX5 receptor and autophagosomes. Acts as an activator of the NFE2L2/NRF2 pathway via interaction with KEAP1: interaction inactivates the BCR(KEAP1) complex by sequestering the complex in inclusion bodies, promoting nuclear accumulation of NFE2L2/NRF2 and subsequent expression of cytoprotective genes. Promotes relocalization of 'Lys-63'-linked ubiquitinated STING1 to autophagosomes. Involved in endosome organization by retaining vesicles in the perinuclear cloud: following ubiquitination by RNF26, attracts specific vesicle-associated adapters, forming a molecular bridge that restrains cognate vesicles in the perinuclear region and organizes the endosomal pathway for efficient cargo transport. Sequesters tensin TNS2 into cytoplasmic puncta, promoting TNS2 ubiquitination and proteasomal degradation. May regulate the activation of NFKB1 by TNF-alpha, nerve growth factor (NGF) and interleukin-1. May play a role in titin/TTN downstream signaling in muscle cells. Adapter that mediates the interaction between TRAF6 and CYLD. In Homo sapiens (Human), this protein is Sequestosome-1.